The sequence spans 161 residues: MSQLTHINAAGEAHMVDVSAKAETVREARAEAFVTMRSETLAMIIDGRHHKGDVFATARIAGIQAAKRTWDLIPLCHPLMLSKVEVNLQAEPEHNRVRIETLCRLTGKTGVEMEALTAASVAALTIYDMCKAVQKDMVIGPVRLLAKSGGKSGDFKVEADD.

Residues 75–77 (LCH) and 113–114 (ME) each bind substrate. The active site involves D128.

The protein belongs to the MoaC family. In terms of assembly, homohexamer; trimer of dimers.

The enzyme catalyses (8S)-3',8-cyclo-7,8-dihydroguanosine 5'-triphosphate = cyclic pyranopterin phosphate + diphosphate. It participates in cofactor biosynthesis; molybdopterin biosynthesis. In terms of biological role, catalyzes the conversion of (8S)-3',8-cyclo-7,8-dihydroguanosine 5'-triphosphate to cyclic pyranopterin monophosphate (cPMP). The chain is Cyclic pyranopterin monophosphate synthase from Escherichia coli O139:H28 (strain E24377A / ETEC).